Here is a 273-residue protein sequence, read N- to C-terminus: 2,3,4,5-tetrahydropyridine-2,6-dicarboxylate N-succinyltransferase (273 aa).

Residues arginine 104 and aspartate 141 each coordinate substrate.

The protein belongs to the transferase hexapeptide repeat family. Homotrimer.

Its subcellular location is the cytoplasm. It catalyses the reaction (S)-2,3,4,5-tetrahydrodipicolinate + succinyl-CoA + H2O = (S)-2-succinylamino-6-oxoheptanedioate + CoA. The protein operates within amino-acid biosynthesis; L-lysine biosynthesis via DAP pathway; LL-2,6-diaminopimelate from (S)-tetrahydrodipicolinate (succinylase route): step 1/3. This is 2,3,4,5-tetrahydropyridine-2,6-dicarboxylate N-succinyltransferase from Psychrobacter cryohalolentis (strain ATCC BAA-1226 / DSM 17306 / VKM B-2378 / K5).